The chain runs to 109 residues: Flagellar hook-basal body complex protein FliE (109 aa).

Belongs to the FliE family.

The protein localises to the bacterial flagellum basal body. The sequence is that of Flagellar hook-basal body complex protein FliE from Stutzerimonas stutzeri (strain A1501) (Pseudomonas stutzeri).